The primary structure comprises 146 residues: Ribonuclease P protein component (146 aa).

Belongs to the RnpA family. As to quaternary structure, consists of a catalytic RNA component (M1 or rnpB) and a protein subunit.

The enzyme catalyses Endonucleolytic cleavage of RNA, removing 5'-extranucleotides from tRNA precursor.. Functionally, RNaseP catalyzes the removal of the 5'-leader sequence from pre-tRNA to produce the mature 5'-terminus. It can also cleave other RNA substrates such as 4.5S RNA. The protein component plays an auxiliary but essential role in vivo by binding to the 5'-leader sequence and broadening the substrate specificity of the ribozyme. The sequence is that of Ribonuclease P protein component from Chlorobium phaeobacteroides (strain DSM 266 / SMG 266 / 2430).